The chain runs to 361 residues: Chorismate synthase (361 aa).

NADP(+)-binding residues include R48 and R54. FMN-binding positions include 125–127, 238–239, G278, 293–297, and R319; these read RSS, NA, and KPTSS.

This sequence belongs to the chorismate synthase family. As to quaternary structure, homotetramer. FMNH2 serves as cofactor.

The enzyme catalyses 5-O-(1-carboxyvinyl)-3-phosphoshikimate = chorismate + phosphate. The protein operates within metabolic intermediate biosynthesis; chorismate biosynthesis; chorismate from D-erythrose 4-phosphate and phosphoenolpyruvate: step 7/7. Its function is as follows. Catalyzes the anti-1,4-elimination of the C-3 phosphate and the C-6 proR hydrogen from 5-enolpyruvylshikimate-3-phosphate (EPSP) to yield chorismate, which is the branch point compound that serves as the starting substrate for the three terminal pathways of aromatic amino acid biosynthesis. This reaction introduces a second double bond into the aromatic ring system. The sequence is that of Chorismate synthase from Vibrio vulnificus (strain CMCP6).